Consider the following 435-residue polypeptide: GTPase Der (435 aa).

EngA-type G domains follow at residues 4–167 (PVVA…GDKA) and 175–350 (IRFS…ENQT). Residues 10 to 17 (GRPNVGKS), 57 to 61 (DTGGI), 119 to 122 (NKAD), 181 to 188 (GRPNVGKS), 228 to 232 (DTAGI), and 293 to 296 (NKWD) contribute to the GTP site. The 85-residue stretch at 351–435 (RRIQSSVLND…PIKILARKRK (85 aa)) folds into the KH-like domain.

The protein belongs to the TRAFAC class TrmE-Era-EngA-EngB-Septin-like GTPase superfamily. EngA (Der) GTPase family. Associates with the 50S ribosomal subunit.

In terms of biological role, GTPase that plays an essential role in the late steps of ribosome biogenesis. This is GTPase Der from Lactobacillus johnsonii (strain CNCM I-12250 / La1 / NCC 533).